The chain runs to 155 residues: Interleukin-2 (155 aa).

The N-terminal stretch at 1–20 (MYSRQLASCVALALVLLANS) is a signal peptide. O-linked (GalNAc...) threonine glycosylation occurs at Thr-23. A disulfide bridge links Cys-78 with Cys-126.

Belongs to the IL-2 family.

It localises to the secreted. Its function is as follows. Cytokine produced by activated CD4-positive helper T-cells and to a lesser extend activated CD8-positive T-cells and natural killer (NK) cells that plays pivotal roles in the immune response and tolerance. Binds to a receptor complex composed of either the high-affinity trimeric IL-2R (IL2RA/CD25, IL2RB/CD122 and IL2RG/CD132) or the low-affinity dimeric IL-2R (IL2RB and IL2RG). Interaction with the receptor leads to oligomerization and conformation changes in the IL-2R subunits resulting in downstream signaling starting with phosphorylation of JAK1 and JAK3. In turn, JAK1 and JAK3 phosphorylate the receptor to form a docking site leading to the phosphorylation of several substrates including STAT5. This process leads to activation of several pathways including STAT, phosphoinositide-3-kinase/PI3K and mitogen-activated protein kinase/MAPK pathways. Functions as a T-cell growth factor and can increase NK-cell cytolytic activity as well. Promotes strong proliferation of activated B-cells and subsequently immunoglobulin production. Plays a pivotal role in regulating the adaptive immune system by controlling the survival and proliferation of regulatory T-cells, which are required for the maintenance of immune tolerance. Moreover, participates in the differentiation and homeostasis of effector T-cell subsets, including Th1, Th2, Th17 as well as memory CD8-positive T-cells. The sequence is that of Interleukin-2 (IL2) from Meriones unguiculatus (Mongolian jird).